We begin with the raw amino-acid sequence, 141 residues long: Nucleoside triphosphatase NudI (141 aa).

Residues 1-141 (MRQRTIVCPL…RHTLRLKGLL (141 aa)) form the Nudix hydrolase domain. Positions 38-59 (GGVEPGERIEEALRREIREELG) match the Nudix box motif.

Belongs to the Nudix hydrolase family. NudI subfamily. As to quaternary structure, monomer. Requires Mg(2+) as cofactor.

It carries out the reaction a ribonucleoside 5'-triphosphate + H2O = a ribonucleoside 5'-phosphate + diphosphate + H(+). The catalysed reaction is a 2'-deoxyribonucleoside 5'-triphosphate + H2O = a 2'-deoxyribonucleoside 5'-phosphate + diphosphate + H(+). It catalyses the reaction dUTP + H2O = dUMP + diphosphate + H(+). The enzyme catalyses dTTP + H2O = dTMP + diphosphate + H(+). It carries out the reaction dCTP + H2O = dCMP + diphosphate + H(+). Functionally, catalyzes the hydrolysis of nucleoside triphosphates, with a preference for pyrimidine deoxynucleoside triphosphates (dUTP, dTTP and dCTP). The protein is Nucleoside triphosphatase NudI of Salmonella arizonae (strain ATCC BAA-731 / CDC346-86 / RSK2980).